Reading from the N-terminus, the 309-residue chain is Homoserine kinase (309 aa).

91–101 (PIGSGLGSSAC) contributes to the ATP binding site.

Belongs to the GHMP kinase family. Homoserine kinase subfamily.

It is found in the cytoplasm. It carries out the reaction L-homoserine + ATP = O-phospho-L-homoserine + ADP + H(+). Its pathway is amino-acid biosynthesis; L-threonine biosynthesis; L-threonine from L-aspartate: step 4/5. Its function is as follows. Catalyzes the ATP-dependent phosphorylation of L-homoserine to L-homoserine phosphate. The sequence is that of Homoserine kinase (thrB) from Serratia marcescens.